Reading from the N-terminus, the 330-residue chain is Inactive hydroxysteroid dehydrogenase-like protein 1 (330 aa).

Position 2 is an N-acetylalanine (Ala-2). The required for mitochondria translocation stretch occupies residues 2–82; it reads AAVDSFYLLY…SGATDGIGKA (81 aa). NADP(+) is bound by residues 74-80, Asp-125, and Lys-222; that span reads GATDGIG.

The protein belongs to the short-chain dehydrogenases/reductases (SDR) family. 17-beta-HSD 3 subfamily. As to quaternary structure, interacts with STYXL1.

Its subcellular location is the mitochondrion. This chain is Inactive hydroxysteroid dehydrogenase-like protein 1 (Hsdl1), found in Rattus norvegicus (Rat).